Consider the following 190-residue polypeptide: RNA pyrophosphohydrolase (190 aa).

Residues 6–149 form the Nudix hydrolase domain; it reads GYRPNVGIIL…KRDVYTQALN (144 aa). The Nudix box signature appears at 38–59; that stretch reads GGIKYGESPVQAMYRELHEEVG. The segment at 167 to 190 is disordered; the sequence is QRVHGPRSTDNPSSETDGHAHIAG.

This sequence belongs to the Nudix hydrolase family. RppH subfamily. It depends on a divalent metal cation as a cofactor.

Its function is as follows. Accelerates the degradation of transcripts by removing pyrophosphate from the 5'-end of triphosphorylated RNA, leading to a more labile monophosphorylated state that can stimulate subsequent ribonuclease cleavage. The polypeptide is RNA pyrophosphohydrolase (Bordetella parapertussis (strain 12822 / ATCC BAA-587 / NCTC 13253)).